The sequence spans 377 residues: Cilia- and flagella-associated protein 263 (377 aa).

Coiled coils occupy residues 95 to 243 (LTAD…NQEL) and 280 to 354 (LRKE…SLKG).

This sequence belongs to the CFAP263 family. As to quaternary structure, forms a complex with CFAP184; the interaction is required for functional activity in cilia. Interacts with HAP1 and PCM1.

The protein resides in the cytoplasm. It is found in the cytoskeleton. Its subcellular location is the microtubule organizing center. It localises to the centrosome. The protein localises to the centriolar satellite. The protein resides in the cell projection. It is found in the cilium. In terms of biological role, component of centriolar satellites contributing to primary cilium formation. In complex with CFAP263, acts as a regulator of ciliary beating that connects radial spoke 3 (RS3) to the inner dynein arm (IDA) and the nexin-dynein regulatory complex (N-DRC). The complex is positioned parallel to N-DRC and forms a connection between the arch at the base of RS3, the IDA tail and N-DRC. This is Cilia- and flagella-associated protein 263 from Homo sapiens (Human).